A 316-amino-acid polypeptide reads, in one-letter code: Transaldolase (316 aa).

The Schiff-base intermediate with substrate role is filled by K132.

It belongs to the transaldolase family. Type 1 subfamily. In terms of assembly, homodimer.

It is found in the cytoplasm. It catalyses the reaction D-sedoheptulose 7-phosphate + D-glyceraldehyde 3-phosphate = D-erythrose 4-phosphate + beta-D-fructose 6-phosphate. It participates in carbohydrate degradation; pentose phosphate pathway; D-glyceraldehyde 3-phosphate and beta-D-fructose 6-phosphate from D-ribose 5-phosphate and D-xylulose 5-phosphate (non-oxidative stage): step 2/3. Functionally, transaldolase is important for the balance of metabolites in the pentose-phosphate pathway. This chain is Transaldolase, found in Vibrio parahaemolyticus serotype O3:K6 (strain RIMD 2210633).